The chain runs to 1140 residues: Protein shank (1140 aa).

6 ANK repeats span residues 144–174, 178–207, 211–242, 246–275, 279–309, and 312–341; these read QGET…HVDF, EGQT…SPNY, IGLT…DIGV, HGNH…QIDA, NGNS…HLAV, and QGQT…KSSV. The tract at residues 337–412 is disordered; the sequence is PKSSVPYRGT…ITPSEYGTMR (76 aa). The span at 351-364 shows a compositional bias: basic residues; that stretch reads TRRRLSSTITRRRS. The span at 388 to 412 shows a compositional bias: low complexity; it reads SAAPSPSPSRSSRTTITPSEYGTMR. The 94-residue stretch at 436–529 folds into the PDZ domain; the sequence is ILVIPRGVKG…TITLKVITVD (94 aa). Composition is skewed to polar residues over residues 640–657 and 687–704; these read DQES…NSVS and TSTF…QLSR. Disordered regions lie at residues 640-673, 687-856, 875-902, 961-993, and 1008-1028; these read DQES…ASSA, TSTF…AASA, QLKK…STTD, KDSG…HSPN, and YGQK…SSTV. Low complexity-rich tracts occupy residues 761–775 and 784–793; these read QHQN…QQHP and PQPIQQQQSS. Composition is skewed to pro residues over residues 794–806 and 823–847; these read IPPP…PPHC and VPPP…PPPG. Polar residues predominate over residues 964–974; sequence GYTSSRTSLEP. Basic and acidic residues predominate over residues 977–988; the sequence is SEEKDHRPHFSL. The segment covering 1015–1028 has biased composition (low complexity); the sequence is SVASSSTASSSSTV. One can recognise an SAM domain in the interval 1078 to 1140; the sequence is WSVDDVIGWL…IESALRGLLQ (63 aa).

The protein belongs to the SHANK family. Interacts (via PDZ domain) with egl-19 (via C-terminus). In terms of tissue distribution, expressed in the pharynx, pharyngeal-intestinal valve, intestine, rectal epithelial cells, tail neurons, nerve cord and sperm.

Its subcellular location is the cell projection. The protein resides in the pseudopodium. The protein localises to the cytoplasmic vesicle. It is found in the postsynaptic density. Scaffold protein that most likely acts in the postsynaptic density (PSD) of excitatory synapses which orchestrates synapse formation and maintenance at neuromuscular junctions. Associates with and trafficks the L-type calcium channel egl-19 to the cell surface of body wall muscles to ensure the function of the calcium channel and therefore maintain the Ca(2+) current density. The maintenance of Ca(2+) also allows for the downstream regulation of Ca(2+)-induced expression of genes such as gem-4. Plays a role in the regulation of the defecation cycle, and this may be in association with the inositol trisphosphate (IP3) receptor itr-1, which in turn mediates periodic calcium release and muscle contractions. Required for normal fertility and pharyngeal pumping. The polypeptide is Protein shank (Caenorhabditis elegans).